The chain runs to 62 residues: ATP synthase subunit epsilon, mitochondrial (62 aa).

A Phosphothreonine modification is found at T52.

Belongs to the eukaryotic ATPase epsilon family. F-type ATPases have 2 components, CF(1) - the catalytic core - and CF(0) - the membrane proton channel. CF(1) has five subunits: alpha(3), beta(3), gamma(1), delta(1), epsilon(1). CF(0) has three main subunits: a, b and c.

Its subcellular location is the mitochondrion. It localises to the mitochondrion inner membrane. Mitochondrial membrane ATP synthase (F(1)F(0) ATP synthase or Complex V) produces ATP from ADP in the presence of a proton gradient across the membrane which is generated by electron transport complexes of the respiratory chain. F-type ATPases consist of two structural domains, F(1) - containing the extramembraneous catalytic core, and F(0) - containing the membrane proton channel, linked together by a central stalk and a peripheral stalk. During catalysis, ATP synthesis in the catalytic domain of F(1) is coupled via a rotary mechanism of the central stalk subunits to proton translocation. Part of the complex F(1) domain and of the central stalk which is part of the complex rotary element. Rotation of the central stalk against the surrounding alpha(3)beta(3) subunits leads to hydrolysis of ATP in three separate catalytic sites on the beta subunits. The chain is ATP synthase subunit epsilon, mitochondrial (ATP15) from Saccharomyces cerevisiae (strain ATCC 204508 / S288c) (Baker's yeast).